We begin with the raw amino-acid sequence, 417 residues long: NADH-quinone oxidoreductase subunit D (417 aa).

This sequence belongs to the complex I 49 kDa subunit family. NDH-1 is composed of 14 different subunits. Subunits NuoB, C, D, E, F, and G constitute the peripheral sector of the complex.

Its subcellular location is the cell inner membrane. It catalyses the reaction a quinone + NADH + 5 H(+)(in) = a quinol + NAD(+) + 4 H(+)(out). Functionally, NDH-1 shuttles electrons from NADH, via FMN and iron-sulfur (Fe-S) centers, to quinones in the respiratory chain. The immediate electron acceptor for the enzyme in this species is believed to be ubiquinone. Couples the redox reaction to proton translocation (for every two electrons transferred, four hydrogen ions are translocated across the cytoplasmic membrane), and thus conserves the redox energy in a proton gradient. The sequence is that of NADH-quinone oxidoreductase subunit D from Polaromonas naphthalenivorans (strain CJ2).